Here is a 339-residue protein sequence, read N- to C-terminus: Protein RecA (339 aa).

Residue 74 to 81 (GPESSGKT) participates in ATP binding.

The protein belongs to the RecA family.

It is found in the cytoplasm. Can catalyze the hydrolysis of ATP in the presence of single-stranded DNA, the ATP-dependent uptake of single-stranded DNA by duplex DNA, and the ATP-dependent hybridization of homologous single-stranded DNAs. It interacts with LexA causing its activation and leading to its autocatalytic cleavage. This is Protein RecA from Phytoplasma mali (strain AT).